A 343-amino-acid chain; its full sequence is N-acetyl-gamma-glutamyl-phosphate reductase (343 aa).

Residue C147 is part of the active site.

This sequence belongs to the NAGSA dehydrogenase family. Type 1 subfamily.

It is found in the cytoplasm. It carries out the reaction N-acetyl-L-glutamate 5-semialdehyde + phosphate + NADP(+) = N-acetyl-L-glutamyl 5-phosphate + NADPH + H(+). Its pathway is amino-acid biosynthesis; L-arginine biosynthesis; N(2)-acetyl-L-ornithine from L-glutamate: step 3/4. Catalyzes the NADPH-dependent reduction of N-acetyl-5-glutamyl phosphate to yield N-acetyl-L-glutamate 5-semialdehyde. The protein is N-acetyl-gamma-glutamyl-phosphate reductase of Listeria monocytogenes serotype 4a (strain HCC23).